The following is a 534-amino-acid chain: Multicopper oxidase LPR1 homolog 3 (534 aa).

2 residues coordinate Cu cation: His-84 and His-86. The N-linked (GlcNAc...) asparagine glycan is linked to Asn-109. Positions 133 and 135 each coordinate Cu cation. The region spanning 219–291 is the Plastocyanin-like domain; the sequence is PFQAVQRRRY…VDFSLVVNPN (73 aa). 6 N-linked (GlcNAc...) asparagine glycosylation sites follow: Asn-234, Asn-291, Asn-312, Asn-323, Asn-341, and Asn-372. His-419, His-422, and His-424 together coordinate Cu cation. Asn-450 is a glycosylation site (N-linked (GlcNAc...) asparagine). Cu cation-binding residues include His-515, Cys-516, His-517, His-521, and Met-526.

Belongs to the multicopper oxidase family. Requires Cu cation as cofactor. Expressed in roots and basal stems.

The protein resides in the endoplasmic reticulum membrane. In terms of biological role, multicopper oxidase that may play a role in the maintenance of inorganic phosphate homeostasis. This is Multicopper oxidase LPR1 homolog 3 from Oryza sativa subsp. japonica (Rice).